The chain runs to 431 residues: MAAFFLGESEMREHSSDLFMMTLNPFREQTTTTNAHDDHFYNLCFGSQQYRPRDEVGHIEQGNSSISTFSNGGVFRALAPIYLKAAQELLNEIVNVGNGSHGAKQERPVSKESTIYGVEDINGGYKPGVAALQMKKAKLISMGEMVEQRYKQYHDQMQTIISSFEQAAGLGSANSYTHMALQTISKQFRAVKDMISLQIKQINKLLGQKEFDEQLKKLGKMAHHHSNAWRPQRGLPEKAVSVLRSWLFEHFLHPYPRDLDKVMLAKQTGLTKSQVSNWFINARVRMWKPLVEELYSEEMDIEESRKGSDRYSTKGSSSKQPYNNTTSNESSNTILPAFRQGFTETETPRQNSSSSCSVVMRFTKQHMNQANFINFNGGFENYHTMDGNSVSLSLGLPHSCDQTFNNIHFESTSHGTENSAIYSSSTYQIMD.

The segment at 80 to 96 (PIYLKAAQELLNEIVNV) is SR/KY domain. Residues 128-199 (GVAALQMKKA…AVKDMISLQI (72 aa)) form a BELL domain region. Residues 228–290 (AWRPQRGLPE…NARVRMWKPL (63 aa)) constitute a DNA-binding region (homeobox). A compositionally biased stretch (basic and acidic residues) spans 302 to 312 (EESRKGSDRYS). The interval 302–333 (EESRKGSDRYSTKGSSSKQPYNNTTSNESSNT) is disordered. The span at 313 to 322 (TKGSSSKQPY) shows a compositional bias: polar residues. The segment covering 323 to 333 (NNTTSNESSNT) has biased composition (low complexity).

The protein belongs to the TALE/BELL homeobox family. In terms of assembly, may form heterodimeric complexes with TALE/KNOX proteins. Interacts with OFP1.

The protein resides in the nucleus. This is BEL1-like homeodomain protein 5 (BLH5) from Arabidopsis thaliana (Mouse-ear cress).